Here is a 427-residue protein sequence, read N- to C-terminus: Histidine--tRNA ligase (427 aa).

It belongs to the class-II aminoacyl-tRNA synthetase family. In terms of assembly, homodimer.

The protein resides in the cytoplasm. The catalysed reaction is tRNA(His) + L-histidine + ATP = L-histidyl-tRNA(His) + AMP + diphosphate + H(+). The protein is Histidine--tRNA ligase of Corynebacterium urealyticum (strain ATCC 43042 / DSM 7109).